Reading from the N-terminus, the 401-residue chain is Phosphoglycerate kinase (401 aa).

Substrate-binding positions include 20–22 (DFN), R35, 58–61 (HLGR), R117, and R154. ATP is bound by residues K204, G298, E329, and 358–361 (GGDS).

Belongs to the phosphoglycerate kinase family. As to quaternary structure, monomer.

It is found in the cytoplasm. The catalysed reaction is (2R)-3-phosphoglycerate + ATP = (2R)-3-phospho-glyceroyl phosphate + ADP. It functions in the pathway carbohydrate degradation; glycolysis; pyruvate from D-glyceraldehyde 3-phosphate: step 2/5. The polypeptide is Phosphoglycerate kinase (Bifidobacterium adolescentis (strain ATCC 15703 / DSM 20083 / NCTC 11814 / E194a)).